Reading from the N-terminus, the 427-residue chain is 3-phosphoshikimate 1-carboxyvinyltransferase (427 aa).

The 3-phosphoshikimate site is built by Lys-22, Ser-23, and Arg-27. Phosphoenolpyruvate is bound at residue Lys-22. Positions 96 and 124 each coordinate phosphoenolpyruvate. The 3-phosphoshikimate site is built by Ser-169, Ser-170, Gln-171, Ser-197, Asp-313, Asn-336, and Lys-340. Gln-171 lines the phosphoenolpyruvate pocket. Catalysis depends on Asp-313, which acts as the Proton acceptor. Positions 344, 386, and 411 each coordinate phosphoenolpyruvate.

This sequence belongs to the EPSP synthase family. In terms of assembly, monomer.

It is found in the cytoplasm. It catalyses the reaction 3-phosphoshikimate + phosphoenolpyruvate = 5-O-(1-carboxyvinyl)-3-phosphoshikimate + phosphate. Its pathway is metabolic intermediate biosynthesis; chorismate biosynthesis; chorismate from D-erythrose 4-phosphate and phosphoenolpyruvate: step 6/7. Catalyzes the transfer of the enolpyruvyl moiety of phosphoenolpyruvate (PEP) to the 5-hydroxyl of shikimate-3-phosphate (S3P) to produce enolpyruvyl shikimate-3-phosphate and inorganic phosphate. The sequence is that of 3-phosphoshikimate 1-carboxyvinyltransferase from Escherichia coli O1:K1 / APEC.